The primary structure comprises 93 residues: Large ribosomal subunit protein uL23 (93 aa).

It belongs to the universal ribosomal protein uL23 family. In terms of assembly, part of the 50S ribosomal subunit. Contacts protein L29, and trigger factor when it is bound to the ribosome.

One of the early assembly proteins it binds 23S rRNA. One of the proteins that surrounds the polypeptide exit tunnel on the outside of the ribosome. Forms the main docking site for trigger factor binding to the ribosome. The sequence is that of Large ribosomal subunit protein uL23 from Campylobacter jejuni subsp. jejuni serotype O:2 (strain ATCC 700819 / NCTC 11168).